Reading from the N-terminus, the 482-residue chain is Glutamate synthase [NADPH] small chain (482 aa).

The 34-residue stretch at 39–72 (ERANEQANRCSQCGVPFCQVHCPVSNNIPDWLKL) folds into the 4Fe-4S ferredoxin-type domain. The [4Fe-4S] cluster site is built by Cys95, Cys99, Cys105, and Cys109.

As to quaternary structure, aggregate of 4 catalytic active heterodimers, consisting of a large and a small subunit. Requires [4Fe-4S] cluster as cofactor.

The catalysed reaction is 2 L-glutamate + NADP(+) = L-glutamine + 2-oxoglutarate + NADPH + H(+). It functions in the pathway amino-acid biosynthesis; L-glutamate biosynthesis via GLT pathway; L-glutamate from 2-oxoglutarate and L-glutamine (NADP(+) route): step 1/1. It participates in energy metabolism; nitrogen metabolism. In Azospirillum brasilense, this protein is Glutamate synthase [NADPH] small chain (gltD).